The following is a 120-amino-acid chain: uncharacterized protein (120 aa).

The next 2 membrane-spanning stretches (helical) occupy residues 26–46 (PSTS…PAGM) and 57–77 (LLFA…LTLV).

Its subcellular location is the membrane. This is an uncharacterized protein from Saccharomyces cerevisiae (strain ATCC 204508 / S288c) (Baker's yeast).